The following is a 495-amino-acid chain: Protein adenylyltransferase Fic (495 aa).

Positions 1 to 23 (MGTEAEPPSPPSPPAQQQEQANP) are disordered. A helical transmembrane segment spans residues 36–58 (LYRLVLFFIAGSLTAWMFHAFSS). TPR repeat units follow at residues 121–154 (ALVS…APRH) and 155–189 (PEVL…SPSN). The short motif at 246-251 (SVGIEG) is the Inhibitory (S/T)XXXE(G/N) motif element. ATP contacts are provided by residues E250 and 331 to 334 (VGGH). Residues 300 to 435 (ITIKDILELH…IRPFVRFIAD (136 aa)) enclose the Fido domain. The active site involves H378. ATP-binding positions include 382-389 (DGNGRTSR), 414-415 (YY), and N422.

This sequence belongs to the fic family. As to quaternary structure, homodimer.

Its subcellular location is the membrane. The enzyme catalyses L-tyrosyl-[protein] + ATP = O-(5'-adenylyl)-L-tyrosyl-[protein] + diphosphate. It catalyses the reaction L-threonyl-[protein] + ATP = 3-O-(5'-adenylyl)-L-threonyl-[protein] + diphosphate. It carries out the reaction 3-O-(5'-adenylyl)-L-threonyl-[protein] + H2O = L-threonyl-[protein] + AMP + H(+). The side chain of Glu-250 determines which of the two opposing activities (AMPylase or de-AMPylase) will take place. In response to endoplasmic reticulum stress, mediates de-AMPylase activity. Adenylyltransferase activity is inhibited by the inhibitory helix present at the N-terminus: Glu-250 binds ATP and competes with ATP-binding at Arg-389, thereby preventing adenylyltransferase activity. In unstressed cells, disengagement of Glu-250 promotes adenylyltransferase activity. Activation dissociates ATP-binding from Glu-250, allowing ordered binding of the entire ATP moiety with the alpha-phosphate in an orientation that is productive for accepting an incoming target hydroxyl side chain. Functionally, protein that can both mediate the addition of adenosine 5'-monophosphate (AMP) to specific residues of target proteins (AMPylation), and the removal of the same modification from target proteins (de-AMPylation), depending on the context. The side chain of Glu-250 determines which of the two opposing activities (AMPylase or de-AMPylase) will take place. Acts as a key regulator of the unfolded protein response (UPR) by mediating AMPylation or de-AMPylation of Hsc70-3/BiP. In unstressed cells, acts as an adenylyltransferase by mediating AMPylation of Hsc70-3/BiP at 'Thr-518', thereby inactivating it. In response to endoplasmic reticulum stress, acts as a phosphodiesterase by mediating removal of ATP (de-AMPylation) from Hsc70-3/BiP at 'Thr-518', leading to restore HSPA5/BiP activity. This Drosophila erecta (Fruit fly) protein is Protein adenylyltransferase Fic.